We begin with the raw amino-acid sequence, 293 residues long: Probable porphobilinogen deaminase (293 aa).

The residue at position 233 (C233) is an S-(dipyrrolylmethanemethyl)cysteine.

The protein belongs to the HMBS family. Requires dipyrromethane as cofactor.

The enzyme catalyses 4 porphobilinogen + H2O = hydroxymethylbilane + 4 NH4(+). It participates in porphyrin-containing compound metabolism; protoporphyrin-IX biosynthesis; coproporphyrinogen-III from 5-aminolevulinate: step 2/4. In terms of biological role, tetrapolymerization of the monopyrrole PBG into the hydroxymethylbilane pre-uroporphyrinogen in several discrete steps. The polypeptide is Probable porphobilinogen deaminase (Saccharolobus islandicus (strain Y.N.15.51 / Yellowstone #2) (Sulfolobus islandicus)).